An 89-amino-acid chain; its full sequence is Dolichol-phosphate mannose synthase subunit 3 (89 aa).

2 consecutive transmembrane segments (helical) span residues 7–27 (ILSLLVAISAFWIGLLQAAII) and 33–53 (WLLPIYFVVSLGCYGLLMVGV).

It belongs to the DPM3 family. In terms of assembly, component of the dolichol-phosphate mannose (DPM) synthase complex composed of DPMS1, DPMS2 and DPMS3; in the complex interacts directly with DPMS1 and DPMS2.

The protein resides in the endoplasmic reticulum membrane. It functions in the pathway protein modification; protein glycosylation. Regulates the biosynthesis of dolichol phosphate-mannose. Regulatory subunit of the dolichol-phosphate mannose (DPM) synthase complex; essential for the ER localization and stable expression of DPMS1. The polypeptide is Dolichol-phosphate mannose synthase subunit 3 (Arabidopsis thaliana (Mouse-ear cress)).